The following is a 114-amino-acid chain: UPF0102 protein Shew_0226 (114 aa).

The protein belongs to the UPF0102 family.

This Shewanella loihica (strain ATCC BAA-1088 / PV-4) protein is UPF0102 protein Shew_0226.